A 508-amino-acid chain; its full sequence is Transcriptional regulatory protein moc3 (508 aa).

The tract at residues 15–43 (NRTGSINSNPLYIPNPNVEPTPKPTKRRT) is disordered. The segment at residues 46–76 (GCLTCRRRRIKCDETKPFCLNCTKTNRECEG) is a DNA-binding region (zn(2)-C6 fungal-type). Disordered regions lie at residues 110–146 (ASSS…STVT) and 174–193 (NHNV…KPSV). The span at 176 to 193 (NVPTNNSSSATSSTKPSV) shows a compositional bias: low complexity.

Interacts with zfs1.

The protein localises to the nucleus. Induces sexual development and ascus formation. Also involved in calcium homeostasis. This Schizosaccharomyces pombe (strain 972 / ATCC 24843) (Fission yeast) protein is Transcriptional regulatory protein moc3 (moc3).